Consider the following 206-residue polypeptide: Protein Mabiki (206 aa).

The tract at residues 54 to 77 is disordered; the sequence is FSDQDADFPPLPKRRRLGSSSSSV.

Its function is as follows. Plays a role in inducing apoptosis and is involved in the repair of head patterning defects in the embryo caused by extra maternal copies of the homeotic gene bicoid. In Drosophila melanogaster (Fruit fly), this protein is Protein Mabiki.